The primary structure comprises 662 residues: Threonine--tRNA ligase (662 aa).

One can recognise a TGS domain in the interval 1 to 64 (MSQSVSLTFP…ADGKIEIITR (64 aa)). Residues 245-547 (DHRRLGREMD…LIENFAGHMP (303 aa)) form a catalytic region. 3 residues coordinate Zn(2+): Cys-341, His-392, and His-524.

Belongs to the class-II aminoacyl-tRNA synthetase family. Homodimer. Requires Zn(2+) as cofactor.

The protein resides in the cytoplasm. The catalysed reaction is tRNA(Thr) + L-threonine + ATP = L-threonyl-tRNA(Thr) + AMP + diphosphate + H(+). Functionally, catalyzes the attachment of threonine to tRNA(Thr) in a two-step reaction: L-threonine is first activated by ATP to form Thr-AMP and then transferred to the acceptor end of tRNA(Thr). Also edits incorrectly charged L-seryl-tRNA(Thr). The protein is Threonine--tRNA ligase of Rhizobium rhizogenes (strain K84 / ATCC BAA-868) (Agrobacterium radiobacter).